Here is a 626-residue protein sequence, read N- to C-terminus: MGKIRKLDDQLSNLIAAGEVVERPASVVKELVENSIDANSTSIEIHLEEAGLSKIRIIDNGDGIAEEDCIVAFERHATSKIKDENDLFRIRTLGFRGEALPSIASVSELELITSTGDAPGTHLIIKGGDIIKQEKTASRKGTDITVQNLFFNTPARLKYMKTIHTELGNITDIVYRIAMSHPEVSLKLFHNEKKLLHTSGNGDVRQVLASIYSIQVAKKLVPIEAESLDFTIKGYVTLPEVTRASRNYMSTIVNGRYVRNFVLMKAIQQGYHTLLPVGRYPIGFLSIEMDPMLVDVNVHPAKLEVRFSKEQELLKLIEETLQAAFKKIQLIPDAGVTTKKKEKDESVQEQFQFEHAKPKEPSMPEIVLPTGMDEKQEEPQAVKQPTQLWQPSTKPIIEEPIQEEKSWDSNEEGFELEELEEVREIKEIEMNGNDLPPLYPIGQMHGTYIFAQNDKGLYMIDQHAAQERINYEYFRDKVGRVAQEVQELLVPYRIDLSLTEFLRVEEQLEELKKVGLFLEQFGHQSFIVRSHPTWFPKGQETEIIDEMMEQVVKLKKVDIKKLREEAAIMMSCKASIKANQYLTNDQIFALLEELRTTTNPYTCPHGRPILVHHSTYELEKMFKRVM.

A disordered region spans residues 377–413 (EEPQAVKQPTQLWQPSTKPIIEEPIQEEKSWDSNEEG). Positions 383–393 (KQPTQLWQPST) are enriched in polar residues.

Belongs to the DNA mismatch repair MutL/HexB family.

In terms of biological role, this protein is involved in the repair of mismatches in DNA. It is required for dam-dependent methyl-directed DNA mismatch repair. May act as a 'molecular matchmaker', a protein that promotes the formation of a stable complex between two or more DNA-binding proteins in an ATP-dependent manner without itself being part of a final effector complex. The polypeptide is DNA mismatch repair protein MutL (Bacillus anthracis (strain A0248)).